The sequence spans 331 residues: Phosphoenolpyruvate transferase (331 aa).

Residue aspartate 63 participates in 7,8-didemethyl-8-hydroxy-5-deazariboflavin binding.

The protein belongs to the CofD family. As to quaternary structure, homodimer. Mg(2+) is required as a cofactor.

It catalyses the reaction enolpyruvoyl-2-diphospho-5'-guanosine + 7,8-didemethyl-8-hydroxy-5-deazariboflavin = dehydro coenzyme F420-0 + GMP + H(+). It participates in cofactor biosynthesis; coenzyme F420 biosynthesis. Functionally, catalyzes the transfer of the phosphoenolpyruvate moiety from enoylpyruvoyl-2-diphospho-5'-guanosine (EPPG) to 7,8-didemethyl-8-hydroxy-5-deazariboflavin (FO) with the formation of dehydro coenzyme F420-0 and GMP. The sequence is that of Phosphoenolpyruvate transferase from Mycobacterium sp. (strain JLS).